The chain runs to 147 residues: VEWTDAERSAIIGLWGKLNPDELGPQALARCLIVYPWTQRYFATFGNLSSPAAIMGNPKVAAHGRTVMGGLERAIKNMDNIKATYAPLSVMHSEKLHVDPDNFRLLADCITVCAAMKFGPSGFNADVQEAWQKFLSVVVSALCRQYH.

The Globin domain maps to 2-147 (EWTDAERSAI…VVSALCRQYH (146 aa)). Heme b contacts are provided by His-63 and His-92.

Belongs to the globin family. Heterotetramer of two alpha chains and two beta chains. In terms of tissue distribution, red blood cells.

In terms of biological role, involved in oxygen transport from gills to the various peripheral tissues. The polypeptide is Hemoglobin subunit beta (hbb) (Carassius auratus (Goldfish)).